Here is a 1597-residue protein sequence, read N- to C-terminus: Pentafunctional AROM polypeptide (1597 aa).

Residues 1-384 (MGVPTKISIL…HEPRASTVSN (384 aa)) are 3-dehydroquinate synthase. Residues 44 to 46 (DTN), 81 to 84 (ESSK), 114 to 116 (GGV), and aspartate 119 contribute to the NAD(+) site. Arginine 130 is a 7-phospho-2-dehydro-3-deoxy-D-arabino-heptonate binding site. 139-140 (TT) provides a ligand contact to NAD(+). 2 residues coordinate 7-phospho-2-dehydro-3-deoxy-D-arabino-heptonate: aspartate 146 and lysine 152. Residue lysine 161 coordinates NAD(+). Asparagine 162 lines the 7-phospho-2-dehydro-3-deoxy-D-arabino-heptonate pocket. NAD(+)-binding positions include 179–182 (FLNT) and asparagine 190. Residue glutamate 194 participates in Zn(2+) binding. 7-phospho-2-dehydro-3-deoxy-D-arabino-heptonate-binding positions include 194-197 (EVIK) and lysine 250. The active-site Proton acceptor; for 3-dehydroquinate synthase activity is glutamate 260. Residues 264–268 (RNLLN) and histidine 271 contribute to the 7-phospho-2-dehydro-3-deoxy-D-arabino-heptonate site. Histidine 271 serves as a coordination point for Zn(2+). The Proton acceptor; for 3-dehydroquinate synthase activity role is filled by histidine 275. Residues histidine 287 and lysine 356 each contribute to the 7-phospho-2-dehydro-3-deoxy-D-arabino-heptonate site. Position 287 (histidine 287) interacts with Zn(2+). The interval 397-842 (VSPGVPKNLN…WDSLAQTFKV (446 aa)) is EPSP synthase. Cysteine 824 functions as the For EPSP synthase activity in the catalytic mechanism. A shikimate kinase region spans residues 866 to 1057 (ASIFIIGMRG…RSKENTFFVS (192 aa)). ATP is bound at residue 872–879 (GMRGAGKT). The segment at 1058-1278 (LTLPDLAPAA…AAPGQLSARE (221 aa)) is 3-dehydroquinase. Histidine 1181 functions as the Proton acceptor; for 3-dehydroquinate dehydratase activity in the catalytic mechanism. Lysine 1209 functions as the Schiff-base intermediate with substrate; for 3-dehydroquinate dehydratase activity in the catalytic mechanism. The interval 1291–1597 (SKKFAVIGNP…VQPKDDDIST (307 aa)) is shikimate dehydrogenase.

The protein in the N-terminal section; belongs to the sugar phosphate cyclases superfamily. Dehydroquinate synthase family. In the 2nd section; belongs to the EPSP synthase family. This sequence in the 3rd section; belongs to the shikimate kinase family. It in the 4th section; belongs to the type-I 3-dehydroquinase family. The protein in the C-terminal section; belongs to the shikimate dehydrogenase family. Homodimer. Requires Zn(2+) as cofactor.

It is found in the cytoplasm. The enzyme catalyses 7-phospho-2-dehydro-3-deoxy-D-arabino-heptonate = 3-dehydroquinate + phosphate. It carries out the reaction 3-dehydroquinate = 3-dehydroshikimate + H2O. The catalysed reaction is shikimate + NADP(+) = 3-dehydroshikimate + NADPH + H(+). It catalyses the reaction shikimate + ATP = 3-phosphoshikimate + ADP + H(+). The enzyme catalyses 3-phosphoshikimate + phosphoenolpyruvate = 5-O-(1-carboxyvinyl)-3-phosphoshikimate + phosphate. The protein operates within metabolic intermediate biosynthesis; chorismate biosynthesis; chorismate from D-erythrose 4-phosphate and phosphoenolpyruvate: step 2/7. It functions in the pathway metabolic intermediate biosynthesis; chorismate biosynthesis; chorismate from D-erythrose 4-phosphate and phosphoenolpyruvate: step 3/7. It participates in metabolic intermediate biosynthesis; chorismate biosynthesis; chorismate from D-erythrose 4-phosphate and phosphoenolpyruvate: step 4/7. Its pathway is metabolic intermediate biosynthesis; chorismate biosynthesis; chorismate from D-erythrose 4-phosphate and phosphoenolpyruvate: step 5/7. The protein operates within metabolic intermediate biosynthesis; chorismate biosynthesis; chorismate from D-erythrose 4-phosphate and phosphoenolpyruvate: step 6/7. In terms of biological role, the AROM polypeptide catalyzes 5 consecutive enzymatic reactions in prechorismate polyaromatic amino acid biosynthesis. This chain is Pentafunctional AROM polypeptide, found in Ajellomyces dermatitidis (strain ER-3 / ATCC MYA-2586) (Blastomyces dermatitidis).